Here is a 62-residue protein sequence, read N- to C-terminus: Amolopin-P1 (62 aa).

The first 22 residues, 1–22 (MFPMKKSLLLLFFFGPISLSFC), serve as a signal peptide directing secretion. The propeptide occupies 23–44 (DQERGADEEENGGEVTEQEVKR).

As to expression, expressed by the skin glands.

It localises to the secreted. Antimicrobial peptide with activity against Gram-positive bacteria. Has been tested against S.aureus (MIC=37.5 ug/mL), against B.pumilus (MIC=75.0 ug/mL), B.cereus (no activity detected). Does not show activity against Gram-negative bacteria (E.coli, B.dysenteriae, A.calcoaceticus, P.aeruginosa) and fungi (C.albicans). Does not show hemolytic activity against rabbit erythrocytes. The sequence is that of Amolopin-P1 from Amolops loloensis (Lolokou Sucker Frog).